Reading from the N-terminus, the 278-residue chain is Large ribosomal subunit protein uL2c (278 aa).

Positions 222–241 (GVVMNPNDHPHGGGEGRSPI) are disordered.

This sequence belongs to the universal ribosomal protein uL2 family. As to quaternary structure, part of the 50S ribosomal subunit.

Its subcellular location is the plastid. It is found in the chloroplast. This chain is Large ribosomal subunit protein uL2c (rpl2), found in Tupiella akineta (Green alga).